The primary structure comprises 117 residues: Small ribosomal subunit protein uS17 (117 aa).

The disordered stretch occupies residues 1 to 42; that stretch reads MMAEAKKAAPKKAATAASKDADAKGPKHTPPNPKVRGRRKTR.

This sequence belongs to the universal ribosomal protein uS17 family. Part of the 30S ribosomal subunit.

One of the primary rRNA binding proteins, it binds specifically to the 5'-end of 16S ribosomal RNA. This is Small ribosomal subunit protein uS17 from Mycolicibacterium paratuberculosis (strain ATCC BAA-968 / K-10) (Mycobacterium paratuberculosis).